A 387-amino-acid polypeptide reads, in one-letter code: 1-deoxy-D-xylulose 5-phosphate reductoisomerase (387 aa).

NADPH contacts are provided by Thr10, Gly11, Ser12, Ile13, Gly36, Lys37, Asn38, and Asn123. Residue Lys124 coordinates 1-deoxy-D-xylulose 5-phosphate. Glu125 is a binding site for NADPH. Mn(2+) is bound at residue Asp149. 1-deoxy-D-xylulose 5-phosphate is bound by residues Ser150, Glu151, Ser175, and His198. Glu151 provides a ligand contact to Mn(2+). Gly204 provides a ligand contact to NADPH. Ser211, Asn216, Lys217, and Glu220 together coordinate 1-deoxy-D-xylulose 5-phosphate. Glu220 serves as a coordination point for Mn(2+).

This sequence belongs to the DXR family. Mg(2+) serves as cofactor. The cofactor is Mn(2+).

The enzyme catalyses 2-C-methyl-D-erythritol 4-phosphate + NADP(+) = 1-deoxy-D-xylulose 5-phosphate + NADPH + H(+). It participates in isoprenoid biosynthesis; isopentenyl diphosphate biosynthesis via DXP pathway; isopentenyl diphosphate from 1-deoxy-D-xylulose 5-phosphate: step 1/6. Its function is as follows. Catalyzes the NADPH-dependent rearrangement and reduction of 1-deoxy-D-xylulose-5-phosphate (DXP) to 2-C-methyl-D-erythritol 4-phosphate (MEP). The polypeptide is 1-deoxy-D-xylulose 5-phosphate reductoisomerase (Pelotomaculum thermopropionicum (strain DSM 13744 / JCM 10971 / SI)).